Consider the following 512-residue polypeptide: MLTMGTALSQQVDANWQTYIMIAVYFLILIVIGFYGYKQATGNLSEYMLGGRSIGPYITALSAGASDMSGWMIMGLPGSVYSTGLSAMWITIGLTLGAYINYFVVAPRLRVYTELAGDAITLPDFFKNRLNDKNNVLKIISGLIIVVFFTLYTHSGFVSGGKLFESAFGLDYHFGLILVAFIVIFYTFFGGYLAVSITDFFQGVIMLIAMVMVPIVAMMNLNGWGTFHDVAAMKPTNLNLFKGLSFIGIISLFSWGLGYFGQPHIIVRFMSIKSHKMLPKARRLGISWMAVGLLGAVAVGLTGIAFVPAYHIKLEDPETLFIVMSQVLFHPLVGGFLLAAILAAIMSTISSQLLVTSSSLTEDFYKLIRGEEKAKTHQKEFVMIGRLSVLVVAIVAIAIAWNPNDTILNLVGNAWAGFGASFSPLVLFALYWKGLTRAGAVSGMVSGALVVIVWIAWIKPLAHINEIFGLYEIIPGFIVSVIVTYVVSKLTKKPGAFVETDLNKVRDIVREK.

The next 13 helical transmembrane spans lie at 16–36 (WQTYIMIAVYFLILIVIGFYG), 54–74 (IGPYITALSAGASDMSGWMIM), 85–105 (LSAMWITIGLTLGAYINYFVV), 139–159 (IISGLIIVVFFTLYTHSGFVS), 174–194 (FGLILVAFIVIFYTFFGGYLA), 200–220 (FFQGVIMLIAMVMVPIVAMMN), 240–260 (LFKGLSFIGIISLFSWGLGYF), 286–306 (ISWMAVGLLGAVAVGLTGIAF), 327–347 (VLFHPLVGGFLLAAILAAIMS), 381–401 (FVMIGRLSVLVVAIVAIAIAW), 410–430 (LVGNAWAGFGASFSPLVLFAL), 438–458 (AGAVSGMVSGALVVIVWIAWI), and 467–487 (IFGLYEIIPGFIVSVIVTYVV).

The protein belongs to the sodium:solute symporter (SSF) (TC 2.A.21) family.

The protein localises to the cell membrane. It carries out the reaction L-proline(in) + Na(+)(in) = L-proline(out) + Na(+)(out). Functionally, catalyzes the sodium-dependent uptake of extracellular L-proline. Since most S.aureus strains are L-proline auxotrophs, this transporter may aid the bacterial persistence during an infection of tissues with low proline concentrations. This Staphylococcus aureus (strain Mu3 / ATCC 700698) protein is Sodium/proline symporter (putP).